A 252-amino-acid chain; its full sequence is Transcription factor bHLH117 (252 aa).

The segment at 103 to 141 (LFPSLSPPLPAAKRQKLNSTSSSTTSGSPTASNDGGIIT) is disordered. The segment covering 121 to 134 (STSSSTTSGSPTAS) has biased composition (low complexity). A bHLH domain is found at 130–179 (SPTASNDGGIITKRRKISDKIRSLEKLMPWERKMNLAMTLEESHKYIKFL).

Homodimer.

It localises to the nucleus. The polypeptide is Transcription factor bHLH117 (BHLH117) (Arabidopsis thaliana (Mouse-ear cress)).